A 264-amino-acid chain; its full sequence is Exodeoxyribonuclease YycJ (264 aa).

A divalent metal cation-binding residues include His-58, His-60, Asp-62, His-63, and Asp-145.

Belongs to the metallo-beta-lactamase superfamily. Fe(2+) serves as cofactor. It depends on Zn(2+) as a cofactor. The cofactor is Mn(2+).

Functionally, 5'-&gt;3' double-stranded DNA exonuclease. May play a role in mutation mismatch repair (MMR). Required for accurate coordination of cell division with DNA replication. May play a role in cell wall metabolism. This is Exodeoxyribonuclease YycJ from Bacillus anthracis.